The following is a 545-amino-acid chain: CTP synthase (545 aa).

The tract at residues 1–266 is amidoligase domain; it reads MATNYIFVTG…DTFVCDRFRL (266 aa). Ser14 contributes to the CTP binding site. Position 14 (Ser14) interacts with UTP. Residues 15 to 20 and Asp72 contribute to the ATP site; that span reads SLGKGI. 2 residues coordinate Mg(2+): Asp72 and Glu140. CTP-binding positions include 147-149, 187-192, and Lys223; these read DIE and KTKPTQ. UTP contacts are provided by residues 187-192 and Lys223; that span reads KTKPTQ. 239 to 241 is an ATP binding site; that stretch reads KDV. The 252-residue stretch at 291-542 folds into the Glutamine amidotransferase type-1 domain; it reads TIGMVGKYVE…VAAAKAYQDS (252 aa). Gly352 provides a ligand contact to L-glutamine. Cys379 functions as the Nucleophile; for glutamine hydrolysis in the catalytic mechanism. L-glutamine contacts are provided by residues 380–383, Glu403, and Arg470; that span reads LGMQ. Residues His515 and Glu517 contribute to the active site.

It belongs to the CTP synthase family. Homotetramer.

The catalysed reaction is UTP + L-glutamine + ATP + H2O = CTP + L-glutamate + ADP + phosphate + 2 H(+). It carries out the reaction L-glutamine + H2O = L-glutamate + NH4(+). It catalyses the reaction UTP + NH4(+) + ATP = CTP + ADP + phosphate + 2 H(+). Its pathway is pyrimidine metabolism; CTP biosynthesis via de novo pathway; CTP from UDP: step 2/2. With respect to regulation, allosterically activated by GTP, when glutamine is the substrate; GTP has no effect on the reaction when ammonia is the substrate. The allosteric effector GTP functions by stabilizing the protein conformation that binds the tetrahedral intermediate(s) formed during glutamine hydrolysis. Inhibited by the product CTP, via allosteric rather than competitive inhibition. Its function is as follows. Catalyzes the ATP-dependent amination of UTP to CTP with either L-glutamine or ammonia as the source of nitrogen. Regulates intracellular CTP levels through interactions with the four ribonucleotide triphosphates. This is CTP synthase from Actinobacillus pleuropneumoniae serotype 5b (strain L20).